Reading from the N-terminus, the 396-residue chain is Elongation factor Tu (396 aa).

A tr-type G domain is found at Lys10–Glu206. Residues Gly19–Thr26 form a G1 region. Residue Gly19–Thr26 coordinates GTP. Thr26 provides a ligand contact to Mg(2+). Positions Gly60–Ser64 are G2. A G3 region spans residues Asp81–Gly84. GTP is bound by residues Asp81–His85 and Asn136–Asp139. A G4 region spans residues Asn136–Asp139. The tract at residues Ser174–Val176 is G5.

This sequence belongs to the TRAFAC class translation factor GTPase superfamily. Classic translation factor GTPase family. EF-Tu/EF-1A subfamily. Monomer.

Its subcellular location is the cytoplasm. The catalysed reaction is GTP + H2O = GDP + phosphate + H(+). GTP hydrolase that promotes the GTP-dependent binding of aminoacyl-tRNA to the A-site of ribosomes during protein biosynthesis. The polypeptide is Elongation factor Tu (Rhizorhabdus wittichii (strain DSM 6014 / CCUG 31198 / JCM 15750 / NBRC 105917 / EY 4224 / RW1) (Sphingomonas wittichii)).